The following is a 201-amino-acid chain: Ras-related protein Rab-1C (201 aa).

The disordered stretch occupies residues 1-20 (MGCSPSKEGNGSFSSTSTSF). A lipid anchor (N-myristoyl glycine) is attached at glycine 2. Cysteine 3 carries the S-palmitoyl cysteine lipid modification. Residues 40–48 (GDSGVGKSC), 58–65 (FTDSYIST), 88–92 (DTAGQ), 146–149 (NKCD), and 176–178 (SAK) each bind GTP. Residues 62–70 (YISTIGVDF) carry the Effector region motif.

The protein belongs to the small GTPase superfamily. Rab family. In terms of processing, although this sequence lacks the C-terminal cysteine motifs subject to isoprenylation in other Rab proteins, it does have N-terminal myristoylation and S-palmitoylation sequence motifs.

This chain is Ras-related protein Rab-1C (Rab1C), found in Dictyostelium discoideum (Social amoeba).